The primary structure comprises 527 residues: Catalase (527 aa).

Position 2 is an N-acetylalanine (A2). Phosphoserine is present on S9. Active-site residues include H75 and N148. NADP(+) is bound by residues H194, S201, R203, and N213. K221 bears the N6-succinyllysine mark. K233 is modified (N6-acetyllysine). K237, W303, H305, and K306 together coordinate NADP(+). K306 is subject to N6-acetyllysine; alternate. K306 bears the N6-succinyllysine; alternate mark. Heme is bound at residue Y358. Residues S417 and S422 each carry the phosphoserine modification. K480 is modified (N6-acetyllysine; alternate). At K480 the chain carries N6-succinyllysine; alternate. Position 499 is an N6-acetyllysine (K499). T511 carries the phosphothreonine modification. Residues S515 and S517 each carry the phosphoserine modification. The Microbody targeting signal; atypical motif lies at 524-527 (KANL).

The protein belongs to the catalase family. As to quaternary structure, homotetramer. Interacts (via microbody targeting signal) with PEX5, monomeric form interacts with PEX5, leading to its translocation into peroxisomes. Heme serves as cofactor. The cofactor is NADP(+).

It is found in the peroxisome matrix. It carries out the reaction 2 H2O2 = O2 + 2 H2O. Functionally, catalyzes the degradation of hydrogen peroxide (H(2)O(2)) generated by peroxisomal oxidases to water and oxygen, thereby protecting cells from the toxic effects of hydrogen peroxide. Promotes growth of cells including T-cells, B-cells, myeloid leukemia cells, melanoma cells, mastocytoma cells and normal and transformed fibroblast cells. The polypeptide is Catalase (CAT) (Homo sapiens (Human)).